Here is a 112-residue protein sequence, read N- to C-terminus: Type III inner-rod protein PscI (112 aa).

This sequence belongs to the YscI/HrpB family. Homomultimer (through its C-terminal region).

Component of the type III secretion (T3S) injectisome that translocates effector toxins into host cells, facilitating the establishment and dissemination of infection. Polymerizes into flexible and regularly twisted fibrils and plays an essential role in needle assembly. This chain is Type III inner-rod protein PscI (pscI), found in Pseudomonas aeruginosa (strain ATCC 15692 / DSM 22644 / CIP 104116 / JCM 14847 / LMG 12228 / 1C / PRS 101 / PAO1).